An 881-amino-acid chain; its full sequence is Serine/threonine-protein phosphatase 6 regulatory subunit 1 (881 aa).

The tract at residues 10–403 (SSHLDTLLER…VFNNFLHAQV (394 aa)) is interaction with PPP6C. S232 carries the post-translational modification Phosphoserine. Position 524 is a phosphothreonine (T524). 5 positions are modified to phosphoserine: S529, S530, S531, S635, and S638. Composition is skewed to acidic residues over residues 621–642 (DDDE…DGED) and 669–686 (DSED…DEEG). A disordered region spans residues 621 to 881 (DDDEEEEDEE…PEGPASPGSQ (261 aa)). Residues 700-710 (YPSPGPQPPGP) are compositionally biased toward pro residues. Phosphoserine is present on residues S702, S726, and S759. The span at 814-830 (APSSSDSATRDPSTSVP) shows a compositional bias: polar residues. The residue at position 846 (S846) is a Phosphoserine.

It belongs to the SAPS family. Protein phosphatase 6 (PP6) holoenzyme is proposed to be a heterotrimeric complex formed of the catalytic subunit, a SAPS domain-containing subunit (PP6R) and an ankyrin repeat-domain containing regulatory subunit (ARS). Interacts with PPP6C and NFKBIE. Interacts with ANKRD28, ANKRD44 and ANKRD52. In terms of tissue distribution, ubiquitous with higher expression in testis.

The protein localises to the cytoplasm. Regulatory subunit of protein phosphatase 6 (PP6). May function as a scaffolding PP6 subunit. Involved in the PP6-mediated dephosphorylation of NFKBIE opposing its degradation in response to TNF-alpha. This Homo sapiens (Human) protein is Serine/threonine-protein phosphatase 6 regulatory subunit 1 (PPP6R1).